A 927-amino-acid chain; its full sequence is Dual serine/threonine and tyrosine protein kinase (927 aa).

The interval 1 to 21 (MEADGQSWAGESVSGPGPGGG) is disordered. Residues 393-429 (RKKENELYESLMNIANRKQEEMKDMIVETLNTMKEEL) adopt a coiled-coil conformation. Residues 650–904 (PKLGQELGRG…PLLGIVQPML (255 aa)) form the Protein kinase domain. ATP contacts are provided by residues 656–664 (LGRGQYGVV) and Lys-679. Residue Asp-775 is the Proton acceptor of the active site.

This sequence belongs to the protein kinase superfamily. Ser/Thr protein kinase family. Expressed in brain, heart, skeletal muscle, kidney and lung. Expressed in maturing tubular epithelia, with the most prominent expression in the medulla and the papilla. Expressed in thin ascending limb of the loop of Henle and the distal convoluted tubule. Expressed in all layers of transitional ureteric epithelium and in the ureteric smooth-muscle cells (at protein level). Widely expressed. Highly expressed in many brain regions, including in cerebellum, olfactory, hippocampus and cerebral cortex.

It localises to the cytoplasm. The protein localises to the cell membrane. The protein resides in the apical cell membrane. It is found in the basolateral cell membrane. Its subcellular location is the cell junction. The catalysed reaction is L-seryl-[protein] + ATP = O-phospho-L-seryl-[protein] + ADP + H(+). It catalyses the reaction L-threonyl-[protein] + ATP = O-phospho-L-threonyl-[protein] + ADP + H(+). It carries out the reaction L-tyrosyl-[protein] + ATP = O-phospho-L-tyrosyl-[protein] + ADP + H(+). In terms of biological role, acts as a positive regulator of ERK phosphorylation downstream of fibroblast growth factor-receptor activation. Involved in the regulation of both caspase-dependent apoptosis and caspase-independent cell death. In the skin, it plays a predominant role in suppressing caspase-dependent apoptosis in response to UV stress in a range of dermal cell types. This chain is Dual serine/threonine and tyrosine protein kinase (Dstyk), found in Mus musculus (Mouse).